The following is a 460-amino-acid chain: Protein btn1 (460 aa).

The next 11 membrane-spanning stretches (helical) occupy residues 42–62 (VCVAFWLFGLINNVLYVVILS), 76–96 (VVLLADVIPSFATKLIAPYFI), 105–125 (IIIFVFLSAAGMLLVALSPPY), 135–155 (LAGIVLASLSSGGGELSFVGL), 164–184 (LAAWGSGTGAAGLVGAGAYAL), 195–215 (ATLLASSCLPAVMVVSFFMVL), 287–307 (GLFFPFMLPLLLVYVAEYTIN), 323–343 (FAHFRAFYPAYNAIYQVGVFI), 356–376 (LYLPSFLQILNLVLLTLQAVF), 378–398 (FIPSVYIIFIIIFWEGLLGGL), and 428–448 (AAGICIAGFVSMVFEVWLCDW).

The protein belongs to the battenin family.

The protein resides in the vacuole membrane. Functionally, involved in vacuolar transport and vacuole pH homeostasis. Also required for cytokinesis. This is Protein btn1 (btn1) from Aspergillus fumigatus (strain ATCC MYA-4609 / CBS 101355 / FGSC A1100 / Af293) (Neosartorya fumigata).